A 153-amino-acid chain; its full sequence is 6,7-dimethyl-8-ribityllumazine synthase (153 aa).

Residues F22, 56-58 (AFE), and 80-82 (AVI) each bind 5-amino-6-(D-ribitylamino)uracil. Residue 85–86 (AT) participates in (2S)-2-hydroxy-3-oxobutyl phosphate binding. H88 (proton donor) is an active-site residue. F113 contacts 5-amino-6-(D-ribitylamino)uracil. Position 127 (R127) interacts with (2S)-2-hydroxy-3-oxobutyl phosphate.

Belongs to the DMRL synthase family.

It carries out the reaction (2S)-2-hydroxy-3-oxobutyl phosphate + 5-amino-6-(D-ribitylamino)uracil = 6,7-dimethyl-8-(1-D-ribityl)lumazine + phosphate + 2 H2O + H(+). The protein operates within cofactor biosynthesis; riboflavin biosynthesis; riboflavin from 2-hydroxy-3-oxobutyl phosphate and 5-amino-6-(D-ribitylamino)uracil: step 1/2. Functionally, catalyzes the formation of 6,7-dimethyl-8-ribityllumazine by condensation of 5-amino-6-(D-ribitylamino)uracil with 3,4-dihydroxy-2-butanone 4-phosphate. This is the penultimate step in the biosynthesis of riboflavin. The chain is 6,7-dimethyl-8-ribityllumazine synthase from Alkaliphilus metalliredigens (strain QYMF).